We begin with the raw amino-acid sequence, 353 residues long: Forkhead box protein I3-A (353 aa).

A DNA-binding region (fork-head) is located at residues 116-210; sequence RPPYSYSALI…DNGNFRRKRK (95 aa). Positions 201–255 are disordered; the sequence is DNGNFRRKRKRKSDSLAEEEGKGYSGSDSALSSPKNPSDSSERGNSPISTDQAPC. Residues 206 to 212 carry the Nuclear localization signal motif; it reads RRKRKRK. Residues 213-222 show a composition bias toward basic and acidic residues; the sequence is SDSLAEEEGK. A compositionally biased stretch (polar residues) spans 226–252; it reads GSDSALSSPKNPSDSSERGNSPISTDQ.

Expressed in ionocyte precursors.

It localises to the nucleus. In terms of biological role, transcription factor required for epithelial cell differentiation. Involved in specification of skin ionocytes from epidermal precursors. In Danio rerio (Zebrafish), this protein is Forkhead box protein I3-A.